The primary structure comprises 103 residues: Large ribosomal subunit protein bL21 (103 aa).

It belongs to the bacterial ribosomal protein bL21 family. As to quaternary structure, part of the 50S ribosomal subunit. Contacts protein L20.

This protein binds to 23S rRNA in the presence of protein L20. The protein is Large ribosomal subunit protein bL21 of Clostridium perfringens (strain ATCC 13124 / DSM 756 / JCM 1290 / NCIMB 6125 / NCTC 8237 / Type A).